Reading from the N-terminus, the 241-residue chain is Probable septum site-determining protein MinC (241 aa).

A disordered region spans residues Pro-109–Thr-135.

This sequence belongs to the MinC family. Interacts with MinD and FtsZ.

Functionally, cell division inhibitor that blocks the formation of polar Z ring septums. Rapidly oscillates between the poles of the cell to destabilize FtsZ filaments that have formed before they mature into polar Z rings. Prevents FtsZ polymerization. The chain is Probable septum site-determining protein MinC from Stutzerimonas stutzeri (strain A1501) (Pseudomonas stutzeri).